The chain runs to 143 residues: Endoribonuclease YbeY (143 aa).

3 residues coordinate Zn(2+): histidine 109, histidine 113, and histidine 119.

This sequence belongs to the endoribonuclease YbeY family. It depends on Zn(2+) as a cofactor.

Its subcellular location is the cytoplasm. Functionally, single strand-specific metallo-endoribonuclease involved in late-stage 70S ribosome quality control and in maturation of the 3' terminus of the 16S rRNA. The protein is Endoribonuclease YbeY of Neorickettsia sennetsu (strain ATCC VR-367 / Miyayama) (Ehrlichia sennetsu).